The chain runs to 31 residues: Cytochrome b6-f complex subunit 6 (31 aa).

Residues 5–25 traverse the membrane as a helical segment; sequence ISYLGILVGALLFVTITFLTL.

Belongs to the PetL family. As to quaternary structure, the 4 large subunits of the cytochrome b6-f complex are cytochrome b6, subunit IV (17 kDa polypeptide, PetD), cytochrome f and the Rieske protein, while the 4 small subunits are PetG, PetL, PetM and PetN. The complex functions as a dimer.

It is found in the plastid. Its subcellular location is the chloroplast thylakoid membrane. Component of the cytochrome b6-f complex, which mediates electron transfer between photosystem II (PSII) and photosystem I (PSI), cyclic electron flow around PSI, and state transitions. PetL is important for photoautotrophic growth as well as for electron transfer efficiency and stability of the cytochrome b6-f complex. This chain is Cytochrome b6-f complex subunit 6, found in Chlorokybus atmophyticus (Soil alga).